A 162-amino-acid polypeptide reads, in one-letter code: Cytochrome c-type biogenesis protein CcmE (162 aa).

The Cytoplasmic portion of the chain corresponds to 1–8; it reads MNPVRKKR. A helical; Signal-anchor for type II membrane protein membrane pass occupies residues 9–29; it reads LIIVLAIVVGVGAAVGLALSA. Over 30-162 the chain is Periplasmic; sequence LQQNINLFYT…GETSYNQEGK (133 aa). Heme-binding residues include His124 and Tyr128. Residues 139 to 148 are compositionally biased toward basic and acidic residues; sequence DSGQLKHYEN. A disordered region spans residues 139-162; the sequence is DSGQLKHYENGKAAGETSYNQEGK.

The protein belongs to the CcmE/CycJ family.

It localises to the cell inner membrane. Its function is as follows. Heme chaperone required for the biogenesis of c-type cytochromes. Transiently binds heme delivered by CcmC and transfers the heme to apo-cytochromes in a process facilitated by CcmF and CcmH. The chain is Cytochrome c-type biogenesis protein CcmE from Pseudomonas aeruginosa (strain LESB58).